Consider the following 411-residue polypeptide: Pre-mRNA-splicing factor dre4 (411 aa).

The 34-residue stretch at 3 to 36 (QPLPPGWTEHKAPSGIPYYWNAELKKSTYQRPSF) folds into the WW 1 domain. A disordered region spans residues 65–84 (NAEERKNSRDLRKQLPDRPK). The segment covering 66 to 83 (AEERKNSRDLRKQLPDRP) has biased composition (basic and acidic residues). Positions 89 to 122 (IPNNDSWVVVFTKKNRYFFHNLKSHESYWEPPLE) constitute a WW 2 domain. Residues 138 to 209 (ISKDSSQSQN…KSHSAEELEF (72 aa)) form a disordered region. Over residues 140–151 (KDSSQSQNVDSG) the composition is skewed to polar residues. Residues 152–166 (KTNHEEIHESRHLQT) show a composition bias toward basic and acidic residues. The segment covering 167 to 179 (EIEEPSGLEESSE) has biased composition (acidic residues). The region spanning 239 to 293 (TDDARRVFTELLKDKNIGAYQPWELVYPKLLDDDRFYVLDSGERRKEVFEEYCKS) is the FF domain.

In terms of assembly, component of the spliceosomal complex. Interacts with prp19.

The protein resides in the nucleus. Its function is as follows. Component of the spliceosome involved in mRNA processing. The chain is Pre-mRNA-splicing factor dre4 (dre4) from Schizosaccharomyces pombe (strain 972 / ATCC 24843) (Fission yeast).